The following is a 158-amino-acid chain: Rhombotin-2 (158 aa).

2 LIM zinc-binding domains span residues 30 to 89 and 94 to 153; these read CGGC…RLFG and CASC…EWTK.

In terms of assembly, interacts with BEX2 and KDM5A. Interacts via its LIM domains with ELF2 and LDB1. Also interacts with basic helix-loop-helix protein TAL1/SCL and can assemble in a complex with LMO2 and TAL1/SCL. Expressed in early mouse development in central nervous system, lung, kidney, liver and spleen but only very low levels occur in thymus.

The protein localises to the nucleus. Functionally, acts with TAL1/SCL to regulate red blood cell development. Also acts with LDB1 to maintain erythroid precursors in an immature state. This chain is Rhombotin-2 (Lmo2), found in Mus musculus (Mouse).